The following is an 88-amino-acid chain: Small ribosomal subunit protein bS20 (88 aa).

Belongs to the bacterial ribosomal protein bS20 family.

In terms of biological role, binds directly to 16S ribosomal RNA. The polypeptide is Small ribosomal subunit protein bS20 (Coprothermobacter proteolyticus (strain ATCC 35245 / DSM 5265 / OCM 4 / BT)).